Consider the following 412-residue polypeptide: Argininosuccinate synthase (412 aa).

ATP-binding positions include 24 to 32 (AFSGGLDTS) and A50. L-citrulline-binding residues include Y103 and S108. G132 serves as a coordination point for ATP. L-aspartate contacts are provided by T134, N138, and D139. N138 provides a ligand contact to L-citrulline. Position 142 (R142) interacts with L-citrulline.

The protein belongs to the argininosuccinate synthase family. Type 1 subfamily. Homotetramer.

The protein resides in the cytoplasm. The enzyme catalyses L-citrulline + L-aspartate + ATP = 2-(N(omega)-L-arginino)succinate + AMP + diphosphate + H(+). The protein operates within amino-acid biosynthesis; L-arginine biosynthesis; L-arginine from L-ornithine and carbamoyl phosphate: step 2/3. The chain is Argininosuccinate synthase from Xanthomonas axonopodis pv. citri (strain 306).